The following is a 298-amino-acid chain: NFU1 iron-sulfur cluster scaffold homolog, mitochondrial (298 aa).

The interval Ile-194–Val-262 is nifU. 2 residues coordinate [4Fe-4S] cluster: Cys-231 and Cys-234.

Belongs to the NifU family.

The protein localises to the mitochondrion. Its function is as follows. Molecular scaffold for [Fe-S] cluster assembly of mitochondrial iron-sulfur proteins. The protein is NFU1 iron-sulfur cluster scaffold homolog, mitochondrial of Drosophila grimshawi (Hawaiian fruit fly).